The sequence spans 382 residues: MGKSAVLELAEDLISRPSVTPEDAGCQELMIARLKAVGFRVTRLPANGVENFWAERGGAGPRLCFAGHTDVVPSGPLAEWQNDPFQPIIRDGMLYGRGAADMKGSLAAMVVAAERFVALHPAHSGRLAFLITSDEEGIATHGTRHVVDWLREHGETIDWCVVGEPSSEKVLGDVIKNGRRGSLNGRLTVHGIQGHVAYPDKADNPIHRAFRPLADLVDQSWDAGNDFFPPTRLQFSNIHAGTGANNVIPGQLQADFNFRFSTESTPESLQAGVHKILDASAMRYTIDWQLSGPPFFTAPGPLVAATQKALQAVEQRVAQLSTGGGTSDGRFIAQLGGQVVELGPVNATIHKINECVAVADLEHLAQIYMEIMVHLLETANGR.

A Zn(2+)-binding site is contributed by His68. Asp70 is a catalytic residue. Asp101 is a Zn(2+) binding site. Glu135 acts as the Proton acceptor in catalysis. Zn(2+)-binding residues include Glu136, Glu164, and His350.

Belongs to the peptidase M20A family. DapE subfamily. Homodimer. Zn(2+) is required as a cofactor. The cofactor is Co(2+).

The enzyme catalyses N-succinyl-(2S,6S)-2,6-diaminopimelate + H2O = (2S,6S)-2,6-diaminopimelate + succinate. Its pathway is amino-acid biosynthesis; L-lysine biosynthesis via DAP pathway; LL-2,6-diaminopimelate from (S)-tetrahydrodipicolinate (succinylase route): step 3/3. Functionally, catalyzes the hydrolysis of N-succinyl-L,L-diaminopimelic acid (SDAP), forming succinate and LL-2,6-diaminopimelate (DAP), an intermediate involved in the bacterial biosynthesis of lysine and meso-diaminopimelic acid, an essential component of bacterial cell walls. This is Succinyl-diaminopimelate desuccinylase from Acidithiobacillus ferrooxidans (strain ATCC 23270 / DSM 14882 / CIP 104768 / NCIMB 8455) (Ferrobacillus ferrooxidans (strain ATCC 23270)).